The following is a 575-amino-acid chain: Cyclic nucleotide-gated channel alpha-4 (575 aa).

The Cytoplasmic portion of the chain corresponds to 1-38 (MSQDGKVKTTESTPPAPTKARKWLPVLDPSGDYYYWWL). Residues 39–60 (NTMVFPIMYNLIIVVCRACFPD) traverse the membrane as a helical segment. The Extracellular portion of the chain corresponds to 61–70 (LQHSYLVAWF). Residues 71–91 (VLDYTSDLLYLLDIGVRFHTG) form a helical membrane-spanning segment. The Cytoplasmic segment spans residues 92–116 (FLEQGILVVDKGMIASRYVRTWSFL). A helical membrane pass occupies residues 117 to 135 (LDLASLVPTDAAYVQLGPH). Residues 136–140 (IPTLR) lie on the Extracellular side of the membrane. A helical transmembrane segment spans residues 141–159 (LNRFLRVPRLFEAFDRTET). At 160–166 (RTAYPNA) the chain is on the cytoplasmic side. The tract at residues 164–272 (PNAFRIAKLM…GSMSSVIYNM (109 aa)) is ion conduction pathway. Residues 167 to 190 (FRIAKLMLYIFVVIHWNSCLYFAL) traverse the membrane as a helical segment. The Extracellular portion of the chain corresponds to 191-213 (SRYLGFGRDAWVYPDPAQPGFER). 2 helical membrane passes run 214–248 (LRRQ…LFMV) and 249–273 (GDFL…YNMN). Positions 231 to 234 (TVGD) are selectivity filter. A C-linker region spans residues 274–350 (TADAAFYPDH…STLSRVQIFQ (77 aa)). The Cytoplasmic segment spans residues 274 to 575 (TADAAFYPDH…AGQAGPSGIE (302 aa)). The IQ-type motif lies at 292–302 (LQHVNKRLERR). 348 to 471 (IFQNCEASLL…AVMEEKGREI (124 aa)) contacts a nucleoside 3',5'-cyclic phosphate. Residues 354-474 (ASLLEELVLK…EEKGREILLK (121 aa)) are cyclic nucleotide-binding domain. Residues G414, S417, R430, and T431 each coordinate 3',5'-cyclic GMP. Residues R430 and T431 each coordinate 3',5'-cyclic AMP. The stretch at 493–547 (TESRLKGLDQQLDDLQTKFARLLAELESSALKIAYRIERLEWQTREWPMPEDMGE) forms a coiled coil. The interval 537–575 (REWPMPEDMGEADDEAEPGEGTSKDGEGKAGQAGPSGIE) is disordered. Over residues 544–554 (DMGEADDEAEP) the composition is skewed to acidic residues.

This sequence belongs to the cyclic nucleotide-gated cation channel (TC 1.A.1.5) family. CNGA4 subfamily. As to quaternary structure, the olfactory cyclic nucleotide-gated channel is an heterotetramer composed of CNGA2, CNGA4 and CNGB1b subunits with 2:1:1 stoichiometry. May form homomeric channels gated by nitric oxide. N-glycosylated. As to expression, olfactory neurons. Expressed in olfactory sensory cilia (at protein level).

It is found in the cell projection. Its subcellular location is the cilium membrane. The enzyme catalyses Ca(2+)(in) = Ca(2+)(out). It carries out the reaction Na(+)(in) = Na(+)(out). The catalysed reaction is K(+)(in) = K(+)(out). It catalyses the reaction NH4(+)(in) = NH4(+)(out). The enzyme catalyses Rb(+)(in) = Rb(+)(out). It carries out the reaction Li(+)(in) = Li(+)(out). The catalysed reaction is Cs(+)(in) = Cs(+)(out). With respect to regulation, ca(2+)-calmodulin exerts its inhibitory effect in cAMP sensitivity by binding to IQ-like motif of CNGA4 and preferably binds to the channel in the closed state. Inhibition by PIP3 of the CNG channel probably occurs via CGNA2 binding. Ca(2+) currents are inhibited by pimozide, an L-type Ca(2+) channel blocker. In terms of biological role, pore-forming subunit of the olfactory cyclic nucleotide-gated channel. Operates in the cilia of olfactory sensory neurons where chemical stimulation of the odorant is converted to an electrical signal. Mediates odorant-induced cAMP-dependent Ca(2+) influx triggering neuron depolarization. The rise of intracellular Ca(2+) levels potentiates the olfactory response by activating Ca(2+)-dependent Cl(-) channels, but it also serves as a negative feedback signal to desensitize the channel for rapid adaptation to odorants. Conducts cAMP- and cGMP-gated ion currents, with permeability for monovalent and divalent cations. May conduct nitric oxide-gated Ca(2+) currents relevant to neurons of vomeronasal organ, a system involved in the perception of pheromones. This chain is Cyclic nucleotide-gated channel alpha-4, found in Rattus norvegicus (Rat).